The chain runs to 160 residues: Ribosomal RNA large subunit methyltransferase H (160 aa).

S-adenosyl-L-methionine contacts are provided by Leu76 and Gly108.

The protein belongs to the RNA methyltransferase RlmH family. As to quaternary structure, homodimer.

It is found in the cytoplasm. The catalysed reaction is pseudouridine(1915) in 23S rRNA + S-adenosyl-L-methionine = N(3)-methylpseudouridine(1915) in 23S rRNA + S-adenosyl-L-homocysteine + H(+). Specifically methylates the pseudouridine at position 1915 (m3Psi1915) in 23S rRNA. The protein is Ribosomal RNA large subunit methyltransferase H of Rhodopseudomonas palustris (strain TIE-1).